Consider the following 349-residue polypeptide: 11-beta-hydroxysteroid dehydrogenase A (349 aa).

Residues 10-30 (LVAPPFTFFFLCLFLPPYWGL) traverse the membrane as a helical; Signal-anchor for type II membrane protein segment. Residues 13-26 (PPFTFFFLCLFLPP) carry the Proline-knob motif. NADP(+)-binding positions include 54 to 80 (GASS…SARR), aspartate 105, and 132 to 135 (NAAI). Residue serine 184 coordinates substrate. Catalysis depends on tyrosine 197, which acts as the Proton acceptor. Residues 197 to 201 (YSASK) and lysine 201 each bind NADP(+).

Belongs to the short-chain dehydrogenases/reductases (SDR) family. Expressed in seeds (at protein level).

The protein resides in the lipid droplet. Its subcellular location is the membrane. The enzyme catalyses an 11beta-hydroxysteroid + NADP(+) = an 11-oxosteroid + NADPH + H(+). Its function is as follows. Has dehydrogenase activity against 11 beta-hydroxysteroid and 17 beta-hydroxysteroid. May be involved in signal transduction regulated by various sterols. This chain is 11-beta-hydroxysteroid dehydrogenase A, found in Arachis hypogaea (Peanut).